Reading from the N-terminus, the 311-residue chain is MENNVIVFFLSFLSSVVFIEGFKRFQKKLRIGQYIREEGPDLHNYKTGTPTAAGLVFIPIFIAVLLNFNRGPESFLIAFSALSYGLIGAIDDFMKIKRKNASGITAVQKLFMQFTAAFIIVYFIQQINPHTYLIVPFSGYKLDLGWFYYLLSSVVIVGVSNAVNLTDGVDGLAGFVFIGSIVPLLIVGYQSVVYLSLIGLLMGFLWHNWHPASIFMGDAGSLALGGILATSFALNGLELFLIFFGFIFLLETLSVIIQVTSFKFRGKRVFRMSPIHHHFELLGWKEEKIAFRFSTLALLVSLLGIIGWREL.

10 consecutive transmembrane segments (helical) span residues 2 to 22, 48 to 68, 74 to 94, 104 to 124, 144 to 164, 168 to 188, 192 to 212, 214 to 234, 237 to 257, and 288 to 308; these read ENNV…IEGF, GTPT…LLNF, SFLI…DDFM, ITAV…VYFI, LGWF…NAVN, GVDG…LIVG, VVYL…WHPA, IFMG…SFAL, LELF…SVII, and KIAF…IIGW.

Belongs to the glycosyltransferase 4 family. MraY subfamily. The cofactor is Mg(2+).

The protein resides in the cell inner membrane. It carries out the reaction UDP-N-acetyl-alpha-D-muramoyl-L-alanyl-gamma-D-glutamyl-meso-2,6-diaminopimeloyl-D-alanyl-D-alanine + di-trans,octa-cis-undecaprenyl phosphate = di-trans,octa-cis-undecaprenyl diphospho-N-acetyl-alpha-D-muramoyl-L-alanyl-D-glutamyl-meso-2,6-diaminopimeloyl-D-alanyl-D-alanine + UMP. It functions in the pathway cell wall biogenesis; peptidoglycan biosynthesis. In terms of biological role, catalyzes the initial step of the lipid cycle reactions in the biosynthesis of the cell wall peptidoglycan: transfers peptidoglycan precursor phospho-MurNAc-pentapeptide from UDP-MurNAc-pentapeptide onto the lipid carrier undecaprenyl phosphate, yielding undecaprenyl-pyrophosphoryl-MurNAc-pentapeptide, known as lipid I. This is Phospho-N-acetylmuramoyl-pentapeptide-transferase from Kosmotoga olearia (strain ATCC BAA-1733 / DSM 21960 / TBF 19.5.1).